Reading from the N-terminus, the 288-residue chain is Elongation factor Ts (288 aa).

The interval 82–85 (TDFV) is involved in Mg(2+) ion dislocation from EF-Tu.

It belongs to the EF-Ts family.

The protein localises to the cytoplasm. Its function is as follows. Associates with the EF-Tu.GDP complex and induces the exchange of GDP to GTP. It remains bound to the aminoacyl-tRNA.EF-Tu.GTP complex up to the GTP hydrolysis stage on the ribosome. In Chlorobium phaeobacteroides (strain BS1), this protein is Elongation factor Ts.